Reading from the N-terminus, the 372-residue chain is Bifunctional enzyme IspD/IspF (372 aa).

Positions 1–211 (MLDISLIMLG…SALKAPENEL (211 aa)) are 2-C-methyl-D-erythritol 4-phosphate cytidylyltransferase. The 2-C-methyl-D-erythritol 2,4-cyclodiphosphate synthase stretch occupies residues 212–372 (FVGSGFDVHE…SLKFYNWTQI (161 aa)). A divalent metal cation is bound by residues aspartate 218 and histidine 220. 4-CDP-2-C-methyl-D-erythritol 2-phosphate is bound by residues 218–220 (DVH) and 244–245 (HS). Position 252 (histidine 252) interacts with a divalent metal cation. 4-CDP-2-C-methyl-D-erythritol 2-phosphate contacts are provided by residues 266 to 268 (DIG), 271 to 275 (FPDTD), 342 to 345 (TTTE), phenylalanine 349, and arginine 352.

In the N-terminal section; belongs to the IspD/TarI cytidylyltransferase family. IspD subfamily. It in the C-terminal section; belongs to the IspF family. It depends on a divalent metal cation as a cofactor.

The catalysed reaction is 2-C-methyl-D-erythritol 4-phosphate + CTP + H(+) = 4-CDP-2-C-methyl-D-erythritol + diphosphate. The enzyme catalyses 4-CDP-2-C-methyl-D-erythritol 2-phosphate = 2-C-methyl-D-erythritol 2,4-cyclic diphosphate + CMP. It functions in the pathway isoprenoid biosynthesis; isopentenyl diphosphate biosynthesis via DXP pathway; isopentenyl diphosphate from 1-deoxy-D-xylulose 5-phosphate: step 2/6. Its pathway is isoprenoid biosynthesis; isopentenyl diphosphate biosynthesis via DXP pathway; isopentenyl diphosphate from 1-deoxy-D-xylulose 5-phosphate: step 4/6. Bifunctional enzyme that catalyzes the formation of 4-diphosphocytidyl-2-C-methyl-D-erythritol from CTP and 2-C-methyl-D-erythritol 4-phosphate (MEP) (IspD), and catalyzes the conversion of 4-diphosphocytidyl-2-C-methyl-D-erythritol 2-phosphate (CDP-ME2P) to 2-C-methyl-D-erythritol 2,4-cyclodiphosphate (ME-CPP) with a corresponding release of cytidine 5-monophosphate (CMP) (IspF). The protein is Bifunctional enzyme IspD/IspF of Campylobacter concisus (strain 13826).